The chain runs to 305 residues: MSKKLTFQEIILTLQQYWNDQGCMLMQAYDNEKGAGTMSPYTFLRAIGPEPWNAAYVEPSRRPADGRYGENPNRLYQHHQFQVVMKPSPSNIQELYLASLEKLGINPLEHDIRFVEDNWENPSTGSAGLGWEVWLDGMEITQFTYFQQVGGLATSPVTAEVTYGLERLASYIQEVDSVYDIEWAPGVKYGEIFLQPEYEHSKYSFEMSDQDMLLENFEKFEKEASRALEEGLVHPAYDYVLKCSHTFNLLDARGAVSVTERAGYIARIRNLARVVAKTFVAERKKLGFPLLDEATRAILLAEDDE.

This sequence belongs to the class-II aminoacyl-tRNA synthetase family. Tetramer of two alpha and two beta subunits.

The protein resides in the cytoplasm. The catalysed reaction is tRNA(Gly) + glycine + ATP = glycyl-tRNA(Gly) + AMP + diphosphate. The protein is Glycine--tRNA ligase alpha subunit of Streptococcus pyogenes serotype M4 (strain MGAS10750).